The primary structure comprises 256 residues: Geranylgeranylglyceryl phosphate synthase (256 aa).

Mg(2+) contacts are provided by aspartate 28 and serine 53. Residues 172–178 (YLEAGSG), 203–204 (GG), and 225–226 (GT) contribute to the sn-glycerol 1-phosphate site.

The protein belongs to the GGGP/HepGP synthase family. Group II subfamily. The cofactor is Mg(2+).

It localises to the cytoplasm. The catalysed reaction is sn-glycerol 1-phosphate + (2E,6E,10E)-geranylgeranyl diphosphate = sn-3-O-(geranylgeranyl)glycerol 1-phosphate + diphosphate. It participates in membrane lipid metabolism; glycerophospholipid metabolism. Functionally, prenyltransferase that catalyzes the transfer of the geranylgeranyl moiety of geranylgeranyl diphosphate (GGPP) to the C3 hydroxyl of sn-glycerol-1-phosphate (G1P). This reaction is the first ether-bond-formation step in the biosynthesis of archaeal membrane lipids. The protein is Geranylgeranylglyceryl phosphate synthase of Methanococcus maripaludis (strain C7 / ATCC BAA-1331).